The primary structure comprises 79 residues: Acyl carrier protein (79 aa).

The Carrier domain occupies 2 to 77; the sequence is SSIEDRVKKI…QAVDYIKKHL (76 aa). Position 37 is an O-(pantetheine 4'-phosphoryl)serine (Ser37).

Belongs to the acyl carrier protein (ACP) family. Post-translationally, 4'-phosphopantetheine is transferred from CoA to a specific serine of apo-ACP by AcpS. This modification is essential for activity because fatty acids are bound in thioester linkage to the sulfhydryl of the prosthetic group.

The protein localises to the cytoplasm. It participates in lipid metabolism; fatty acid biosynthesis. Carrier of the growing fatty acid chain in fatty acid biosynthesis. This chain is Acyl carrier protein, found in Halorhodospira halophila (strain DSM 244 / SL1) (Ectothiorhodospira halophila (strain DSM 244 / SL1)).